A 642-amino-acid chain; its full sequence is Threonine--tRNA ligase (642 aa).

Positions 1–61 (MPIITLPDGS…EEDASLEIIT (61 aa)) constitute a TGS domain. The tract at residues 244 to 535 (DHRKIGKQLD…LIEEYAGFFP (292 aa)) is catalytic. Positions 335, 386, and 512 each coordinate Zn(2+).

It belongs to the class-II aminoacyl-tRNA synthetase family. Homodimer. Requires Zn(2+) as cofactor.

Its subcellular location is the cytoplasm. The catalysed reaction is tRNA(Thr) + L-threonine + ATP = L-threonyl-tRNA(Thr) + AMP + diphosphate + H(+). Functionally, catalyzes the attachment of threonine to tRNA(Thr) in a two-step reaction: L-threonine is first activated by ATP to form Thr-AMP and then transferred to the acceptor end of tRNA(Thr). Also edits incorrectly charged L-seryl-tRNA(Thr). The protein is Threonine--tRNA ligase of Vibrio vulnificus (strain YJ016).